A 266-amino-acid chain; its full sequence is Pyridoxal phosphate phosphatase YigL (266 aa).

The active-site Nucleophile is Asp-8. Mg(2+) is bound at residue Asp-8. Leu-9 provides a ligand contact to phosphate. Asp-10 contributes to the Mg(2+) binding site. Residues Thr-42 to Gly-43 and Lys-191 contribute to the phosphate site. Asp-214 serves as a coordination point for Mg(2+). Asn-217 is a phosphate binding site.

It belongs to the HAD-like hydrolase superfamily. Cof family. Requires Mg(2+) as cofactor. Mn(2+) serves as cofactor. The cofactor is Co(2+). It depends on Zn(2+) as a cofactor.

The catalysed reaction is pyridoxal 5'-phosphate + H2O = pyridoxal + phosphate. It carries out the reaction sugar phosphate + H2O = sugar + phosphate.. Catalyzes the dephosphorylation of pyridoxal-phosphate (PLP) and sugar phosphate. The chain is Pyridoxal phosphate phosphatase YigL (yigL) from Escherichia coli O157:H7.